We begin with the raw amino-acid sequence, 434 residues long: Trigger factor (434 aa).

Positions 161-246 (EDRVTVDFTG…LKKVEQRELP (86 aa)) constitute a PPIase FKBP-type domain.

The protein belongs to the FKBP-type PPIase family. Tig subfamily.

It is found in the cytoplasm. It carries out the reaction [protein]-peptidylproline (omega=180) = [protein]-peptidylproline (omega=0). Involved in protein export. Acts as a chaperone by maintaining the newly synthesized protein in an open conformation. Functions as a peptidyl-prolyl cis-trans isomerase. This Sodalis glossinidius (strain morsitans) protein is Trigger factor.